The sequence spans 233 residues: Zinc import ATP-binding protein ZnuC (233 aa).

In terms of domain architecture, ABC transporter spans 6 to 222 (IEFHNVSKKF…SDFSNALSSL (217 aa)). 38–45 (GPNGAGKT) lines the ATP pocket.

It belongs to the ABC transporter superfamily. Zinc importer (TC 3.A.1.15.5) family. In terms of assembly, the complex is composed of two ATP-binding proteins (ZnuC), two transmembrane proteins (ZnuB) and a solute-binding protein (ZnuA).

The protein localises to the cell inner membrane. The catalysed reaction is Zn(2+)(out) + ATP(in) + H2O(in) = Zn(2+)(in) + ADP(in) + phosphate(in) + H(+)(in). In terms of biological role, part of the ABC transporter complex ZnuABC involved in zinc import. Responsible for energy coupling to the transport system. This is Zinc import ATP-binding protein ZnuC from Rickettsia bellii (strain RML369-C).